A 361-amino-acid polypeptide reads, in one-letter code: Phosphoserine aminotransferase (361 aa).

R43 is a binding site for L-glutamate. Pyridoxal 5'-phosphate is bound by residues 77–78 (AS), W103, T153, D173, and Q196. N6-(pyridoxal phosphate)lysine is present on K197. 238 to 239 (NT) serves as a coordination point for pyridoxal 5'-phosphate.

It belongs to the class-V pyridoxal-phosphate-dependent aminotransferase family. SerC subfamily. In terms of assembly, homodimer. Requires pyridoxal 5'-phosphate as cofactor.

The protein resides in the cytoplasm. The catalysed reaction is O-phospho-L-serine + 2-oxoglutarate = 3-phosphooxypyruvate + L-glutamate. It catalyses the reaction 4-(phosphooxy)-L-threonine + 2-oxoglutarate = (R)-3-hydroxy-2-oxo-4-phosphooxybutanoate + L-glutamate. It functions in the pathway amino-acid biosynthesis; L-serine biosynthesis; L-serine from 3-phospho-D-glycerate: step 2/3. It participates in cofactor biosynthesis; pyridoxine 5'-phosphate biosynthesis; pyridoxine 5'-phosphate from D-erythrose 4-phosphate: step 3/5. In terms of biological role, catalyzes the reversible conversion of 3-phosphohydroxypyruvate to phosphoserine and of 3-hydroxy-2-oxo-4-phosphonooxybutanoate to phosphohydroxythreonine. The chain is Phosphoserine aminotransferase from Azotobacter vinelandii (strain DJ / ATCC BAA-1303).